The sequence spans 674 residues: tRNA-guanine(15) transglycosylase (674 aa).

Asp90 acts as the Nucleophile in catalysis. The substrate site is built by Asp125 and Ala192. Residues Cys275, Cys277, and Cys280 each coordinate Zn(2+). The region spanning 596–671 is the PUA domain; the sequence is HNRVVVSEDS…QAIKTRKWKK (76 aa).

Belongs to the archaeosine tRNA-ribosyltransferase family. Zn(2+) is required as a cofactor.

The enzyme catalyses guanosine(15) in tRNA + 7-cyano-7-deazaguanine = 7-cyano-7-carbaguanosine(15) in tRNA + guanine. The protein operates within tRNA modification; archaeosine-tRNA biosynthesis. Functionally, exchanges the guanine residue with 7-cyano-7-deazaguanine (preQ0) at position 15 in the dihydrouridine loop (D-loop) of archaeal tRNAs. This Methanosphaera stadtmanae (strain ATCC 43021 / DSM 3091 / JCM 11832 / MCB-3) protein is tRNA-guanine(15) transglycosylase.